A 528-amino-acid polypeptide reads, in one-letter code: uncharacterized protein (528 aa).

Basic residues-rich tracts occupy residues 1–16 (MGKASKATKKFTKNHL) and 25–43 (QLARSKKVYGTKNRNSHTK). The disordered stretch occupies residues 1–59 (MGKASKATKKFTKNHLKNTIERRKQLARSKKVYGTKNRNSHTKNKLESGTNDNNKNKED).

Belongs to the NOC2 family.

It localises to the nucleus. The protein localises to the nucleolus. This is an uncharacterized protein from Schizosaccharomyces pombe (strain 972 / ATCC 24843) (Fission yeast).